A 277-amino-acid chain; its full sequence is Caspase-3 (277 aa).

Met1 carries the post-translational modification N-acetylmethionine. Propeptides lie at residues 1–9 (MENSENSVD) and 10–28 (AKSI…KSMD). An N6-acetyllysine modification is found at Lys11. Position 26 is a phosphoserine (Ser26). Residues His121 and Cys163 contribute to the active site. Cys163 is modified (S-nitrosocysteine; in inhibited form).

Belongs to the peptidase C14A family. In terms of assembly, heterotetramer that consists of two anti-parallel arranged heterodimers, each one formed by a 17 kDa (p17) and a 12 kDa (p12) subunit. Interacts with BIRC6/bruce. Post-translationally, cleavage by granzyme B, caspase-6, caspase-8 and caspase-10 generates the two active subunits. Additional processing of the propeptides is likely due to the autocatalytic activity of the activated protease. Active heterodimers between the small subunit of caspase-7 protease and the large subunit of caspase-3 also occur and vice versa. S-nitrosylated on its catalytic site cysteine in unstimulated cell lines and denitrosylated upon activation of the Fas apoptotic pathway, associated with an increase in intracellular caspase activity. Fas therefore activates caspase-3 not only by inducing the cleavage of the caspase zymogen to its active subunits, but also by stimulating the denitrosylation of its active site thiol. In terms of processing, ubiquitinated by BIRC6; this activity is inhibited by DIABLO/SMAC.

It is found in the cytoplasm. It carries out the reaction Strict requirement for an Asp residue at positions P1 and P4. It has a preferred cleavage sequence of Asp-Xaa-Xaa-Asp-|- with a hydrophobic amino-acid residue at P2 and a hydrophilic amino-acid residue at P3, although Val or Ala are also accepted at this position.. Its activity is regulated as follows. Inhibited by BIRC6; following inhibition of BIRC6-caspase binding by DIABLO/SMAC, BIRC6 is subjected to caspase cleavage, leading to an increase in active caspases. Functionally, involved in the activation cascade of caspases responsible for apoptosis execution. At the onset of apoptosis, it proteolytically cleaves poly(ADP-ribose) polymerase PARP1 at a '216-Asp-|-Gly-217' bond. Cleaves and activates sterol regulatory element binding proteins (SREBPs) between the basic helix-loop-helix leucine zipper domain and the membrane attachment domain. Cleaves and activates caspase-6, -7 and -9 (CASP6, CASP7 and CASP9, respectively). Cleaves and inactivates interleukin-18 (IL18). Triggers cell adhesion in sympathetic neurons through RET cleavage. Cleaves IL-1 beta between an Asp and an Ala, releasing the mature cytokine which is involved in a variety of inflammatory processes. Cleaves and inhibits serine/threonine-protein kinase AKT1 in response to oxidative stress. Acts as an inhibitor of type I interferon production during virus-induced apoptosis by mediating cleavage of antiviral proteins CGAS, IRF3 and MAVS, thereby preventing cytokine overproduction. Also involved in pyroptosis by mediating cleavage and activation of gasdermin-E (GSDME). Cleaves XRCC4 and phospholipid scramblase proteins XKR4, XKR8 and XKR9, leading to promote phosphatidylserine exposure on apoptotic cell surface. Cleaves BIRC6 following inhibition of BIRC6-caspase binding by DIABLO/SMAC. The polypeptide is Caspase-3 (CASP3) (Felis catus (Cat)).